Reading from the N-terminus, the 843-residue chain is Protein P (843 aa).

The terminal protein domain (TP) stretch occupies residues 1 to 177 (MPLSYQHFRK…FCGSPYSWEQ (177 aa)). Positions 178 to 346 (ELQHGRLVFQ…YCLSHIVNLL (169 aa)) are spacer. The tract at residues 347–690 (EDWGPCTEHG…YMNLYPVARQ (344 aa)) is polymerase/reverse transcriptase domain (RT). One can recognise a Reverse transcriptase domain in the interval 357–600 (EHHIRIPRTP…YSLNFMGYVI (244 aa)). Asp429, Asp551, and Asp552 together coordinate Mg(2+).

The protein belongs to the hepadnaviridae P protein family.

It carries out the reaction DNA(n) + a 2'-deoxyribonucleoside 5'-triphosphate = DNA(n+1) + diphosphate. It catalyses the reaction Endonucleolytic cleavage to 5'-phosphomonoester.. Activated by host HSP70 and HSP40 in vitro to be able to bind the epsilon loop of the pgRNA. Because deletion of the RNase H region renders the protein partly chaperone-independent, the chaperones may be needed indirectly to relieve occlusion of the RNA-binding site by this domain. Inhibited by several reverse-transcriptase inhibitors: Lamivudine, Adefovir and Entecavir. In terms of biological role, multifunctional enzyme that converts the viral RNA genome into dsDNA in viral cytoplasmic capsids. This enzyme displays a DNA polymerase activity that can copy either DNA or RNA templates, and a ribonuclease H (RNase H) activity that cleaves the RNA strand of RNA-DNA heteroduplexes in a partially processive 3'- to 5'-endonucleasic mode. Neo-synthesized pregenomic RNA (pgRNA) are encapsidated together with the P protein, and reverse-transcribed inside the nucleocapsid. Initiation of reverse-transcription occurs first by binding the epsilon loop on the pgRNA genome, and is initiated by protein priming, thereby the 5'-end of (-)DNA is covalently linked to P protein. Partial (+)DNA is synthesized from the (-)DNA template and generates the relaxed circular DNA (RC-DNA) genome. After budding and infection, the RC-DNA migrates in the nucleus, and is converted into a plasmid-like covalently closed circular DNA (cccDNA). The activity of P protein does not seem to be necessary for cccDNA generation, and is presumably released from (+)DNA by host nuclear DNA repair machinery. The protein is Protein P of Homo sapiens (Human).